The primary structure comprises 356 residues: Dynein regulatory complex protein 10 (356 aa).

A coiled-coil region spans residues 126 to 167 (SNREFFEEVRDREERAVAEQEQLKQKLKLQRVELQKAAGTIQ). The interval 173–209 (ARGEVSEVQSSTQQSRAAIEGSARAQSEADKSSFQSD) is disordered. Residues 178 to 187 (SEVQSSTQQS) show a composition bias toward low complexity. Positions 197–287 (AQSEADKSSF…LRQLQEYNSG (91 aa)) form a coiled coil. Residues 319–348 (QNHAARVIQSYWRGFKKAREAAKKKAKKLE) enclose the IQ domain.

It belongs to the DRC10 family. In terms of assembly, component of the nexin-dynein regulatory complex (N-DRC).

It localises to the cytoplasm. Its subcellular location is the cytoskeleton. It is found in the flagellum axoneme. Component of the nexin-dynein regulatory complex (N-DRC), a key regulator of ciliary/flagellar motility which maintains the alignment and integrity of the distal axoneme and regulates microtubule sliding in motile axonemes. The protein is Dynein regulatory complex protein 10 of Chlamydomonas reinhardtii (Chlamydomonas smithii).